A 148-amino-acid chain; its full sequence is Small ribosomal subunit protein uS7m (148 aa).

This sequence belongs to the universal ribosomal protein uS7 family. In terms of assembly, part of the small ribosomal subunit.

It is found in the mitochondrion. One of the primary rRNA binding proteins, it binds directly to 18S rRNA where it nucleates assembly of the head domain of the small subunit. This chain is Small ribosomal subunit protein uS7m (RPS7), found in Triticum aestivum (Wheat).